We begin with the raw amino-acid sequence, 31 residues long: VAILGAAGGIGQPLSLLMKDDLFNINAGIVK.

Residues 9 to 19 and 20 to 31 contribute to the NAD(+) site; these read GIGQPLSLLMK and DDLFNINAGIVK.

Belongs to the LDH/MDH superfamily. MDH type 1 family. In terms of assembly, homodimer.

The protein localises to the mitochondrion matrix. The catalysed reaction is (S)-malate + NAD(+) = oxaloacetate + NADH + H(+). The chain is Malate dehydrogenase, mitochondrial from Imperata cylindrica (Cogon grass).